The primary structure comprises 963 residues: Copalyl diphosphate synthase (963 aa).

Residues 1–539 (MSPMDLQESA…EAYILAALKR (539 aa)) are type II terpene cyclase (TC). Residues 227–292 (ATQWDDECED…FIEKIRSYLH (66 aa)) form a substrate binding region. Mg(2+) contacts are provided by D311 and D314. The short motif at 311 to 314 (DADD) is the DXDD element. The NSE/DTE motif lies at 333–341 (AMLKEFEEE). Substrate-binding positions include 337–341 (EFEEE) and 521–522 (VT). Residues 540–659 (AADLPDENAE…SVSVHTDHSD (120 aa)) are linker. Over residues 627-648 (TNGHYVNGTNHETPLTNGISNG) the composition is skewed to polar residues. Residues 627–657 (TNGHYVNGTNHETPLTNGISNGDSVSVHTDH) form a disordered region. Positions 660–963 (SYYQRSDWTA…KILARMSLEL (304 aa)) are geranylfarnesyl diphosphate synthase (PT). The isopentenyl diphosphate site is built by K688, R691, and H720. D727 and D731 together coordinate Mg(2+). Positions 727–731 (DDIQD) match the DDXXD 1 motif. Residue R736 participates in dimethylallyl diphosphate binding. R737 serves as a coordination point for isopentenyl diphosphate. Dimethylallyl diphosphate-binding residues include K814, T815, Q848, N855, K865, and K875. A DDXXD 2 motif is present at residues 851–855 (DDYLN).

The protein in the N-terminal section; belongs to the terpene synthase family. This sequence in the C-terminal section; belongs to the FPP/GGPP synthase family. As to quaternary structure, homohexamer. Mg(2+) serves as cofactor.

It catalyses the reaction isopentenyl diphosphate + (2E,6E)-farnesyl diphosphate = (2E,6E,10E)-geranylgeranyl diphosphate + diphosphate. The enzyme catalyses (2E,6E,10E)-geranylgeranyl diphosphate = (+)-copalyl diphosphate. Its function is as follows. Bifunctional terpene synthase that possesses both prenyltransferase and type II terpene cyclase activity, converting isopentenyl diphosphate (IPP) and dimethylallyl diphosphate (DMAPP) into geranylgeranyl diphosphate (GGPP) and further converting GGPP into copalyl diphosphate, respectively. The protein is Copalyl diphosphate synthase of Talaromyces verruculosus (Penicillium verruculosum).